The chain runs to 932 residues: DNA mismatch repair protein MutS (932 aa).

615-622 (GPNMAGKS) provides a ligand contact to ATP.

It belongs to the DNA mismatch repair MutS family.

Its function is as follows. This protein is involved in the repair of mismatches in DNA. It is possible that it carries out the mismatch recognition step. This protein has a weak ATPase activity. The protein is DNA mismatch repair protein MutS of Clostridium botulinum (strain 657 / Type Ba4).